The following is a 612-amino-acid chain: Elongation factor 4 (612 aa).

The 183-residue stretch at 11–193 folds into the tr-type G domain; the sequence is KHIRNFSIVA…EIVKKVPAPN (183 aa). GTP contacts are provided by residues 23–28 and 140–143; these read DHGKST and NKID.

It belongs to the TRAFAC class translation factor GTPase superfamily. Classic translation factor GTPase family. LepA subfamily.

Its subcellular location is the cell membrane. It catalyses the reaction GTP + H2O = GDP + phosphate + H(+). In terms of biological role, required for accurate and efficient protein synthesis under certain stress conditions. May act as a fidelity factor of the translation reaction, by catalyzing a one-codon backward translocation of tRNAs on improperly translocated ribosomes. Back-translocation proceeds from a post-translocation (POST) complex to a pre-translocation (PRE) complex, thus giving elongation factor G a second chance to translocate the tRNAs correctly. Binds to ribosomes in a GTP-dependent manner. The polypeptide is Elongation factor 4 (Lactobacillus gasseri (strain ATCC 33323 / DSM 20243 / BCRC 14619 / CIP 102991 / JCM 1131 / KCTC 3163 / NCIMB 11718 / NCTC 13722 / AM63)).